Consider the following 679-residue polypeptide: Biosynthetic arginine decarboxylase (679 aa).

The interval 1-43 (MKHRGQEEMGVESTATSDEVVKVPANGNKLEGKNHKQKKLLPT) is disordered. Position 149 is an N6-(pyridoxal phosphate)lysine (lysine 149). Residue 331–341 (LDVGGGLGVDY) participates in substrate binding.

The protein belongs to the Orn/Lys/Arg decarboxylase class-II family. SpeA subfamily. It depends on Mg(2+) as a cofactor. Pyridoxal 5'-phosphate is required as a cofactor.

It catalyses the reaction L-arginine + H(+) = agmatine + CO2. Its function is as follows. Catalyzes the biosynthesis of agmatine from arginine. This chain is Biosynthetic arginine decarboxylase, found in Nostoc sp. (strain PCC 7120 / SAG 25.82 / UTEX 2576).